Consider the following 182-residue polypeptide: Protein GrpE (182 aa).

The segment at 1–37 (MSDSSKERKKKFTGMVNKQKSEDQQNNSKQADDLDEL) is disordered.

Belongs to the GrpE family. In terms of assembly, homodimer.

The protein resides in the cytoplasm. Participates actively in the response to hyperosmotic and heat shock by preventing the aggregation of stress-denatured proteins, in association with DnaK and GrpE. It is the nucleotide exchange factor for DnaK and may function as a thermosensor. Unfolded proteins bind initially to DnaJ; upon interaction with the DnaJ-bound protein, DnaK hydrolyzes its bound ATP, resulting in the formation of a stable complex. GrpE releases ADP from DnaK; ATP binding to DnaK triggers the release of the substrate protein, thus completing the reaction cycle. Several rounds of ATP-dependent interactions between DnaJ, DnaK and GrpE are required for fully efficient folding. This is Protein GrpE from Wolbachia sp. subsp. Brugia malayi (strain TRS).